The following is a 66-amino-acid chain: DNA-directed RNA polymerase subunit Rpo10 (66 aa).

Cys-7, Cys-10, Cys-47, and Cys-48 together coordinate Zn(2+).

Belongs to the archaeal Rpo10/eukaryotic RPB10 RNA polymerase subunit family. As to quaternary structure, part of the RNA polymerase complex. The cofactor is Zn(2+).

It localises to the cytoplasm. The enzyme catalyses RNA(n) + a ribonucleoside 5'-triphosphate = RNA(n+1) + diphosphate. In terms of biological role, DNA-dependent RNA polymerase (RNAP) catalyzes the transcription of DNA into RNA using the four ribonucleoside triphosphates as substrates. The chain is DNA-directed RNA polymerase subunit Rpo10 from Halobacterium salinarum (strain ATCC 29341 / DSM 671 / R1).